We begin with the raw amino-acid sequence, 1478 residues long: Serine/threonine-protein kinase BCK1/SLK1/SSP31 (1478 aa).

4 disordered regions span residues 1-70 (MPFL…TSSQ), 99-126 (TSFT…GGNS), 217-359 (NVTN…RRHH), and 373-427 (FGSG…KGNL). A compositionally biased stretch (low complexity) spans 29 to 49 (PTSSVASTKSSSKSPRATSRK). Composition is skewed to polar residues over residues 58-70 (QFPN…TSSQ) and 99-110 (TSFTNSSYKNDN). Over residues 111–126 (GPSSLSDSRKSSGGNS) the composition is skewed to low complexity. Over residues 223–233 (IRQKSASKLKS) the composition is skewed to basic residues. Composition is skewed to polar residues over residues 253–273 (DISN…SGPS) and 281–297 (LHST…SSLY). Composition is skewed to low complexity over residues 298-320 (RRSF…SPSN) and 342-353 (SASPPASPSYPS). Polar residues-rich tracts occupy residues 386-396 (NPQGHSLSSEN) and 407-420 (TNVS…SLPT). T407 carries the phosphothreonine modification. S411 and S491 each carry phosphoserine. Positions 644 to 671 (KPKPAPLTSENNVPLKSVKSKSSMRSGT) are disordered. Positions 659–671 (KSVKSKSSMRSGT) are enriched in low complexity. At S747 the chain carries Phosphoserine. Disordered regions lie at residues 752–877 (LNLP…ASTH), 895–939 (KTDQ…RGNS), 960–1021 (ADAP…TQDK), and 1053–1116 (TEGI…TPKR). The segment covering 765-777 (TPITENESKSSFQ) has biased composition (polar residues). The span at 779–809 (LRKDEGTEIDFNHRRESPYTKPELAPKREAP) shows a compositional bias: basic and acidic residues. Residues 813 to 827 (ANTSPQRTLSTSKQN) show a composition bias toward polar residues. S816 is subject to Phosphoserine. Low complexity-rich tracts occupy residues 851–870 (QLLS…LTSS) and 914–925 (NRSNSTVSTSNS). A compositionally biased stretch (acidic residues) spans 967–977 (DSDDSDDDSSS). A compositionally biased stretch (basic and acidic residues) spans 994–1011 (NENKKDEKSDNSSTHSDE). Phosphoserine occurs at positions 1058 and 1061. Residues 1058-1083 (SPTSPKSLDSLLSPKNVASSRTEPST) are compositionally biased toward low complexity. S1134 carries the phosphoserine; by PKC modification. In terms of domain architecture, Protein kinase spans 1175–1440 (WMKGEMIGKG…ANELLSHPFS (266 aa)). ATP contacts are provided by residues 1181 to 1189 (IGKGSFGAV) and K1204. D1303 functions as the Proton acceptor in the catalytic mechanism.

This sequence belongs to the protein kinase superfamily. STE Ser/Thr protein kinase family. MAP kinase kinase kinase subfamily.

It is found in the cytoplasm. It catalyses the reaction L-seryl-[protein] + ATP = O-phospho-L-seryl-[protein] + ADP + H(+). The catalysed reaction is L-threonyl-[protein] + ATP = O-phospho-L-threonyl-[protein] + ADP + H(+). Functionally, serine/threonine protein kinase involved in a signal transduction pathway that plays a role in yeast cell morphogenesis and cell growth. This pathway seems to start by SMP3; then involve the kinase PKC1 that may act on this kinase. BCK1 probably phosphorylates MKK1 and MKK2 which themselves phosphorylate the MPK1 kinase. This chain is Serine/threonine-protein kinase BCK1/SLK1/SSP31 (BCK1), found in Saccharomyces cerevisiae (strain ATCC 204508 / S288c) (Baker's yeast).